The primary structure comprises 208 residues: Uracil phosphoribosyltransferase (208 aa).

Residues Arg-78, Arg-103, and 130–138 (DPMLATGGT) contribute to the 5-phospho-alpha-D-ribose 1-diphosphate site. Uracil contacts are provided by residues Ile-193 and 198 to 200 (GDA). Residue Asp-199 participates in 5-phospho-alpha-D-ribose 1-diphosphate binding.

Belongs to the UPRTase family. Requires Mg(2+) as cofactor.

The catalysed reaction is UMP + diphosphate = 5-phospho-alpha-D-ribose 1-diphosphate + uracil. Its pathway is pyrimidine metabolism; UMP biosynthesis via salvage pathway; UMP from uracil: step 1/1. Allosterically activated by GTP. Catalyzes the conversion of uracil and 5-phospho-alpha-D-ribose 1-diphosphate (PRPP) to UMP and diphosphate. This Desulfotalea psychrophila (strain LSv54 / DSM 12343) protein is Uracil phosphoribosyltransferase.